The chain runs to 263 residues: Aminoglycoside 3'-phosphotransferase (263 aa).

D183 (proton acceptor) is an active-site residue.

This sequence belongs to the aminoglycoside phosphotransferase family.

The catalysed reaction is kanamycin A + ATP = kanamycin 3'-phosphate + ADP + H(+). In terms of biological role, resistance to kanamycin and structurally-related aminoglycosides, including amikacin. This chain is Aminoglycoside 3'-phosphotransferase (rph), found in Streptomyces ribosidificus.